Reading from the N-terminus, the 585-residue chain is A-type ATP synthase subunit A (585 aa).

232–239 (GPFGSGKT) provides a ligand contact to ATP.

The protein belongs to the ATPase alpha/beta chains family. In terms of assembly, has multiple subunits with at least A(3), B(3), C, D, E, F, H, I and proteolipid K(x).

The protein resides in the cell membrane. The enzyme catalyses ATP + H2O + 4 H(+)(in) = ADP + phosphate + 5 H(+)(out). Functionally, component of the A-type ATP synthase that produces ATP from ADP in the presence of a proton gradient across the membrane. The A chain is the catalytic subunit. The polypeptide is A-type ATP synthase subunit A (Methanosphaera stadtmanae (strain ATCC 43021 / DSM 3091 / JCM 11832 / MCB-3)).